The following is a 270-amino-acid chain: Putative phosphoenolpyruvate synthase regulatory protein (270 aa).

150-157 contributes to the ADP binding site; the sequence is GVSRCGKT.

It belongs to the pyruvate, phosphate/water dikinase regulatory protein family. PSRP subfamily.

It carries out the reaction [pyruvate, water dikinase] + ADP = [pyruvate, water dikinase]-phosphate + AMP + H(+). It catalyses the reaction [pyruvate, water dikinase]-phosphate + phosphate + H(+) = [pyruvate, water dikinase] + diphosphate. Its function is as follows. Bifunctional serine/threonine kinase and phosphorylase involved in the regulation of the phosphoenolpyruvate synthase (PEPS) by catalyzing its phosphorylation/dephosphorylation. The chain is Putative phosphoenolpyruvate synthase regulatory protein from Aeromonas salmonicida (strain A449).